Reading from the N-terminus, the 290-residue chain is Non-homologous end joining protein Ku (290 aa).

The Ku domain occupies 11-183 (TFGLISMPVR…EAPKITSEVK (173 aa)). Residues 253–290 (MKDQKKGSRLAEVDKESTVQMTPKKPAVKERRGRKRVA) are disordered. The segment covering 254–269 (KDQKKGSRLAEVDKES) has biased composition (basic and acidic residues).

It belongs to the prokaryotic Ku family. In terms of assembly, homodimer. Interacts with LigD.

Its function is as follows. With LigD forms a non-homologous end joining (NHEJ) DNA repair enzyme, which repairs dsDNA breaks with reduced fidelity. Binds linear dsDNA with 5'- and 3'- overhangs but not closed circular dsDNA nor ssDNA. Recruits and stimulates the ligase activity of LigD. In Koribacter versatilis (strain Ellin345), this protein is Non-homologous end joining protein Ku.